Reading from the N-terminus, the 51-residue chain is Sperm protamine P1 (51 aa).

2 disulfide bridges follow: C7–C15 and C40–C48.

Belongs to the protamine P1 family. As to quaternary structure, cross-linked by interchain disulfide bonds around the DNA-helix. In terms of tissue distribution, testis.

The protein localises to the nucleus. The protein resides in the chromosome. In terms of biological role, protamines substitute for histones in the chromatin of sperm during the haploid phase of spermatogenesis. They compact sperm DNA into a highly condensed, stable and inactive complex. The chain is Sperm protamine P1 (PRM1) from Capra hircus (Goat).